Consider the following 194-residue polypeptide: uncharacterized protein (194 aa).

The N-terminal stretch at 1–20 (MLYKFTVLLLIYSYLRNLQA) is a signal peptide. N-linked (GlcNAc...) asparagine; by host glycosylation is found at asparagine 31, asparagine 72, asparagine 133, and asparagine 157.

This is an uncharacterized protein from Ostreid herpesvirus 1 (isolate France) (OsHV-1).